The following is a 301-amino-acid chain: MIRSRVNLAREVPKKAKAHLSKERRLIKEDSEFVFGTHSVKNALATRKRECRALYVQNADIHSEFEEFLNKLQYKIPIKSVNKEHLNQITACRPHNGVVLEASSLNVPTISDLLFPAGEEYNNKNGQDSPHNDLNEGKSSSSDNYPPLYVYVDGITDPQNMGAVIRSAYILGAKGILLSKKHNTFLSPVVSKASAGALEVFNISHVKNPMVFLRNSVLKGWKVIGTKPALPDNKDQIYTPHKIKTELMNEPKILVLGSEKGLRTNILTQCSHYVSIPGGDKYVDSLNVSVAAGILLYSLVN.

The N-terminal 11 residues, 1 to 11 (MIRSRVNLARE), are a transit peptide targeting the mitochondrion. The segment at 121–141 (YNNKNGQDSPHNDLNEGKSSS) is disordered.

This sequence belongs to the class IV-like SAM-binding methyltransferase superfamily. RNA methyltransferase TrmH family.

It is found in the mitochondrion. It catalyses the reaction a guanosine in 21S rRNA + S-adenosyl-L-methionine = a 2'-O-methylguanosine in 21S rRNA + S-adenosyl-L-homocysteine + H(+). In terms of biological role, S-adenosyl-L-methionine-dependent 2'-O-ribose methyltransferase that catalyzes the formation of the 2'-O-methylguanosine corresponding to position 2270 in S.cerevisiae 21S mitochondrial large subunit ribosomal RNA (mtLSU rRNA), a universally conserved modification in the peptidyl transferase domain of the mtLSU rRNA. The sequence is that of rRNA methyltransferase 1, mitochondrial from Schizosaccharomyces pombe (strain 972 / ATCC 24843) (Fission yeast).